The primary structure comprises 213 residues: Phosphatidylserine decarboxylase proenzyme (213 aa).

The Schiff-base intermediate with substrate; via pyruvic acid role is filled by Ser-183. The residue at position 183 (Ser-183) is a Pyruvic acid (Ser); by autocatalysis.

The protein belongs to the phosphatidylserine decarboxylase family. PSD-A subfamily. Heterodimer of a large membrane-associated beta subunit and a small pyruvoyl-containing alpha subunit. It depends on pyruvate as a cofactor. Post-translationally, is synthesized initially as an inactive proenzyme. Formation of the active enzyme involves a self-maturation process in which the active site pyruvoyl group is generated from an internal serine residue via an autocatalytic post-translational modification. Two non-identical subunits are generated from the proenzyme in this reaction, and the pyruvate is formed at the N-terminus of the alpha chain, which is derived from the carboxyl end of the proenzyme. The post-translation cleavage follows an unusual pathway, termed non-hydrolytic serinolysis, in which the side chain hydroxyl group of the serine supplies its oxygen atom to form the C-terminus of the beta chain, while the remainder of the serine residue undergoes an oxidative deamination to produce ammonia and the pyruvoyl prosthetic group on the alpha chain.

Its subcellular location is the cell membrane. It catalyses the reaction a 1,2-diacyl-sn-glycero-3-phospho-L-serine + H(+) = a 1,2-diacyl-sn-glycero-3-phosphoethanolamine + CO2. It participates in phospholipid metabolism; phosphatidylethanolamine biosynthesis; phosphatidylethanolamine from CDP-diacylglycerol: step 2/2. In terms of biological role, catalyzes the formation of phosphatidylethanolamine (PtdEtn) from phosphatidylserine (PtdSer). This Syntrophus aciditrophicus (strain SB) protein is Phosphatidylserine decarboxylase proenzyme.